We begin with the raw amino-acid sequence, 157 residues long: D-aminoacyl-tRNA deacylase (157 aa).

The Gly-cisPro motif, important for rejection of L-amino acids motif lies at 137 to 138; that stretch reads GP.

The protein belongs to the DTD family. In terms of assembly, homodimer.

The protein localises to the cytoplasm. It carries out the reaction glycyl-tRNA(Ala) + H2O = tRNA(Ala) + glycine + H(+). The enzyme catalyses a D-aminoacyl-tRNA + H2O = a tRNA + a D-alpha-amino acid + H(+). In terms of biological role, an aminoacyl-tRNA editing enzyme that deacylates mischarged D-aminoacyl-tRNAs. Also deacylates mischarged glycyl-tRNA(Ala), protecting cells against glycine mischarging by AlaRS. Acts via tRNA-based rather than protein-based catalysis; rejects L-amino acids rather than detecting D-amino acids in the active site. By recycling D-aminoacyl-tRNA to D-amino acids and free tRNA molecules, this enzyme counteracts the toxicity associated with the formation of D-aminoacyl-tRNA entities in vivo and helps enforce protein L-homochirality. This is D-aminoacyl-tRNA deacylase from Roseiflexus castenholzii (strain DSM 13941 / HLO8).